Reading from the N-terminus, the 842-residue chain is Synaptonemal complex protein 2-like (842 aa).

4 disordered regions span residues 451 to 473 (GSLE…EPEQ), 505 to 560 (FARD…KQRV), 619 to 666 (STQK…SSLE), and 715 to 738 (EDAP…PGSV). Basic and acidic residues-rich tracts occupy residues 458–470 (TEER…KQDE) and 505–525 (FARD…HDLL). Over residues 543-559 (NHKRKSLRTYSQRKKQR) the composition is skewed to basic residues. Basic and acidic residues-rich tracts occupy residues 624–633 (GLEKPERRGS) and 643–655 (RVTD…EPRS).

Belongs to the SYCP2 family. In terms of tissue distribution, specifically expressed in oocytes.

It localises to the nucleus. It is found in the chromosome. Its subcellular location is the centromere. In terms of biological role, oocyte-specific protein that localizes to centromeres at the dictyate stage and regulates the survival of primordial oocytes. This Mus musculus (Mouse) protein is Synaptonemal complex protein 2-like.